Reading from the N-terminus, the 168-residue chain is Small ribosomal subunit protein uS9 (168 aa).

The interval 1–38 (MAKIADSIDSAQADSVENVESYSTETPESAAPAAPRPV) is disordered. A compositionally biased stretch (polar residues) spans 9 to 22 (DSAQADSVENVESY). The span at 23-37 (STETPESAAPAAPRP) shows a compositional bias: low complexity.

The protein belongs to the universal ribosomal protein uS9 family.

The polypeptide is Small ribosomal subunit protein uS9 (Leifsonia xyli subsp. xyli (strain CTCB07)).